Consider the following 689-residue polypeptide: Pentatricopeptide repeat-containing protein At1g71460, chloroplastic (689 aa).

A chloroplast-targeting transit peptide spans 1 to 49; that stretch reads MEVVSSLGIRDLPASLSVTTSLNHRPHRSDKDGAPAKSPIRPSRTRRPS. Residues 16–68 are disordered; that stretch reads LSVTTSLNHRPHRSDKDGAPAKSPIRPSRTRRPSTSPAKKPKPFRERDAFPSS. Over residues 38-52 the composition is skewed to low complexity; sequence SPIRPSRTRRPSTSP. 18 PPR repeats span residues 75–109, 110–144, 145–175, 176–212, 213–247, 248–282, 283–309, 315–350, 351–381, 382–416, 417–451, 452–482, 483–517, 518–552, 553–583, 584–618, 619–649, and 655–689; these read NPYI…GIPV, NATT…GLES, NEFL…STSS, NVYS…GVDL, NVYS…GLFN, SVFL…DIVV, WGAM…MISE, NSVI…NYVE, QPFV…SKQR, NAIS…GFRP, DVVT…LFLP, NVSL…LEQR, NVKA…KHRP, DSVT…EFES, IPFV…VAVK, GSLT…GFTP, NTFT…MLRM, and SEEH…SLQT.

Belongs to the PPR family. PCMP-A subfamily.

Its subcellular location is the plastid. It localises to the chloroplast. This chain is Pentatricopeptide repeat-containing protein At1g71460, chloroplastic (PCMP-A3), found in Arabidopsis thaliana (Mouse-ear cress).